A 295-amino-acid polypeptide reads, in one-letter code: Pantothenate synthetase (295 aa).

An ATP-binding site is contributed by 30 to 37 (MGNLHDGH). H37 acts as the Proton donor in catalysis. Q61 is a binding site for (R)-pantoate. Position 61 (Q61) interacts with beta-alanine. Position 149–152 (149–152 (GEKD)) interacts with ATP. Q155 serves as a coordination point for (R)-pantoate. ATP contacts are provided by residues V178 and 186–189 (MSSR).

This sequence belongs to the pantothenate synthetase family. As to quaternary structure, homodimer.

It localises to the cytoplasm. It carries out the reaction (R)-pantoate + beta-alanine + ATP = (R)-pantothenate + AMP + diphosphate + H(+). It participates in cofactor biosynthesis; (R)-pantothenate biosynthesis; (R)-pantothenate from (R)-pantoate and beta-alanine: step 1/1. Its function is as follows. Catalyzes the condensation of pantoate with beta-alanine in an ATP-dependent reaction via a pantoyl-adenylate intermediate. The chain is Pantothenate synthetase from Photobacterium profundum (strain SS9).